The sequence spans 243 residues: Ubiquinone/menaquinone biosynthesis C-methyltransferase UbiE (243 aa).

Residues Thr-69, Asp-90, and Asp-116–Ala-117 contribute to the S-adenosyl-L-methionine site.

Belongs to the class I-like SAM-binding methyltransferase superfamily. MenG/UbiE family.

It catalyses the reaction a 2-demethylmenaquinol + S-adenosyl-L-methionine = a menaquinol + S-adenosyl-L-homocysteine + H(+). The enzyme catalyses a 2-methoxy-6-(all-trans-polyprenyl)benzene-1,4-diol + S-adenosyl-L-methionine = a 5-methoxy-2-methyl-3-(all-trans-polyprenyl)benzene-1,4-diol + S-adenosyl-L-homocysteine + H(+). Its pathway is quinol/quinone metabolism; menaquinone biosynthesis; menaquinol from 1,4-dihydroxy-2-naphthoate: step 2/2. The protein operates within cofactor biosynthesis; ubiquinone biosynthesis. In terms of biological role, methyltransferase required for the conversion of demethylmenaquinol (DMKH2) to menaquinol (MKH2) and the conversion of 2-polyprenyl-6-methoxy-1,4-benzoquinol (DDMQH2) to 2-polyprenyl-3-methyl-6-methoxy-1,4-benzoquinol (DMQH2). The protein is Ubiquinone/menaquinone biosynthesis C-methyltransferase UbiE of Cupriavidus necator (strain ATCC 17699 / DSM 428 / KCTC 22496 / NCIMB 10442 / H16 / Stanier 337) (Ralstonia eutropha).